The following is a 528-amino-acid chain: OLD nuclease (528 aa).

The tract at residues 1–153 (MLKRLQVKNF…LAQHLPSIRG (153 aa)) is ATPase domain N-terminus. ATP is bound at residue 31-35 (GAGKT). A dimerization domain region spans residues 154 to 245 (SILGRLLQPV…RESDLTLPGD (92 aa)). An ATPase domain C-terminus region spans residues 246 to 369 (ELGLGIQSAI…FDTARNEVLF (124 aa)). Residues 370-528 (AKRALLVEGY…IRQVTRPMEE (159 aa)) are toprim domain. 4 residues coordinate a divalent metal cation: Glu-377, Asp-381, Asp-431, and Asp-433. The tract at residues 440-461 (RADEETRRKQEQENKAEQEKNQ) is disordered. 2 residues coordinate a divalent metal cation: Ser-478 and Glu-480. The active-site Stabilizes transition state or protonates leaving group is the Arg-487.

Belongs to the class 1 OLD nuclease family. In terms of assembly, homodimer. Requires Mg(2+) as cofactor. It depends on Mn(2+) as a cofactor. Ca(2+) serves as cofactor.

The catalysed reaction is Exonucleolytic cleavage in the 5'- to 3'-direction to yield nucleoside 5'-phosphates.. An exodeoxyribonuclease that degrades linear or supercoiled dsDNA from 5'-3'. Nicks and linearizes circular DNA. Activity is not stimulated by ATP or AMP-PNP, although it has DNA-stimulated ATPase activity. The sequence is that of OLD nuclease from Thermus scotoductus (strain ATCC 700910 / SA-01).